Consider the following 1337-residue polypeptide: ABC transporter D family member 1 (1337 aa).

4 helical membrane passes run 24–44 (ILLAAGIVAAGGTAVYLKSRV), 142–162 (APLFLRLISENIMLCFMLSTL), 247–267 (YASPKYIFWILAYVLGAGTAI), and 342–362 (FLLKYLGATVAVILIIEPFFS). The ABC transmembrane type-1 1 domain maps to 117 to 395 (VFRTALSNRL…SVIISLFQAL (279 aa)). Residues 448 to 695 (VEFSDVKVVT…DAMVVQRAFA (248 aa)) enclose the ABC transporter 1 domain. ATP is bound at residue 481–488 (GPNGSGKS). Residues 751–1049 (LIPTIFDKQG…VVSQSFMAFG (299 aa)) form the ABC transmembrane type-1 2 domain. Residues 900–920 (LLTGQRGVAILYTYMLLGLGF) form a helical membrane-spanning segment. Positions 1091-1337 (LDSQDLLSFS…ELRSIEQTTE (247 aa)) constitute an ABC transporter 2 domain. 1130 to 1137 (GPNGSGKT) provides a ligand contact to ATP.

Belongs to the ABC transporter superfamily. ABCD family. Peroxisomal fatty acyl CoA transporter (TC 3.A.1.203) subfamily.

The protein localises to the peroxisome membrane. Its subcellular location is the glyoxysome membrane. The enzyme catalyses an acyl-CoA(out) + ATP + H2O = an acyl-CoA(in) + ADP + phosphate + H(+). Contributes to the transport of fatty acids and their derivatives (acyl CoAs) across the peroxisomal membrane. Provides acetate to the glyoxylate cycle in developing seedlings. Involved in pollen tube elongation, ovule fertilization, and seeds germination after imbibition (controls the switch between the opposing developmental programs of dormancy and germination), probably by promoting beta-oxidation of storage lipids during gluconeogenesis. Required for biosynthesis of jasmonic acid and conversion of indole butyric acid to indole acetic acid. Confers sensitivity to monofluoroacetic acid (FAc), a toxic acetate analog, and to 2,4-dichlorophenoxybutyric acid (2,4-DB) and indole-3-butyric acid (IBA), two precursors of auxin after beta-oxidation. In Arabidopsis thaliana (Mouse-ear cress), this protein is ABC transporter D family member 1.